The sequence spans 465 residues: Pre-mRNA-splicing factor URN1 (465 aa).

A WW domain is found at 1 to 32 (MRGEWQEFKTPAGKKYYYNKNTKQSRWEKPNL). Disordered stretches follow at residues 28–49 (EKPN…QTER), 144–198 (ERKD…VNQD), and 266–288 (ERSG…DSEV). Phosphoserine is present on S150. Polar residues predominate over residues 160–175 (LQESHTGLVSGYGSSS). The span at 176 to 192 (GEEDEEEDEEEDEENEE) shows a compositional bias: acidic residues. The region spanning 212–266 (DIDERNIFFELFDRYKLDKFSTWSLQSKKIENDPDFYKIRDDTVRESLFEEWCGE) is the FF domain. The segment covering 274-288 (EESDSEDNSEDDSEV) has biased composition (acidic residues).

As to quaternary structure, component of the precatalytic spliceosomal complex B. Interacts with PRP19.

The protein localises to the nucleus. Component of the spliceosome involved in mRNA processing. In Saccharomyces cerevisiae (strain ATCC 204508 / S288c) (Baker's yeast), this protein is Pre-mRNA-splicing factor URN1 (URN1).